The primary structure comprises 508 residues: Probable cytosol aminopeptidase (508 aa).

Mn(2+)-binding residues include K276 and D281. K288 is a catalytic residue. Residues D299, D358, and E360 each coordinate Mn(2+). R362 is an active-site residue.

This sequence belongs to the peptidase M17 family. Mn(2+) serves as cofactor.

It localises to the cytoplasm. It catalyses the reaction Release of an N-terminal amino acid, Xaa-|-Yaa-, in which Xaa is preferably Leu, but may be other amino acids including Pro although not Arg or Lys, and Yaa may be Pro. Amino acid amides and methyl esters are also readily hydrolyzed, but rates on arylamides are exceedingly low.. The catalysed reaction is Release of an N-terminal amino acid, preferentially leucine, but not glutamic or aspartic acids.. Functionally, presumably involved in the processing and regular turnover of intracellular proteins. Catalyzes the removal of unsubstituted N-terminal amino acids from various peptides. This chain is Probable cytosol aminopeptidase, found in Chlorobium luteolum (strain DSM 273 / BCRC 81028 / 2530) (Pelodictyon luteolum).